The primary structure comprises 132 residues: Large ribosomal subunit protein uL22 (132 aa).

Belongs to the universal ribosomal protein uL22 family. In terms of assembly, part of the 50S ribosomal subunit.

This protein binds specifically to 23S rRNA; its binding is stimulated by other ribosomal proteins, e.g. L4, L17, and L20. It is important during the early stages of 50S assembly. It makes multiple contacts with different domains of the 23S rRNA in the assembled 50S subunit and ribosome. Functionally, the globular domain of the protein is located near the polypeptide exit tunnel on the outside of the subunit, while an extended beta-hairpin is found that lines the wall of the exit tunnel in the center of the 70S ribosome. This Rhodospirillum centenum (strain ATCC 51521 / SW) protein is Large ribosomal subunit protein uL22.